Here is a 339-residue protein sequence, read N- to C-terminus: Anthranilate phosphoribosyltransferase (339 aa).

5-phospho-alpha-D-ribose 1-diphosphate contacts are provided by residues G86, 89 to 90 (GD), T94, 96 to 99 (NIST), 114 to 122 (KHGNRGVSS), and S126. G86 contributes to the anthranilate binding site. Mg(2+) is bound at residue S98. N117 is a binding site for anthranilate. R172 is an anthranilate binding site. D230 and E231 together coordinate Mg(2+).

Belongs to the anthranilate phosphoribosyltransferase family. As to quaternary structure, homodimer. Requires Mg(2+) as cofactor.

It catalyses the reaction N-(5-phospho-beta-D-ribosyl)anthranilate + diphosphate = 5-phospho-alpha-D-ribose 1-diphosphate + anthranilate. It participates in amino-acid biosynthesis; L-tryptophan biosynthesis; L-tryptophan from chorismate: step 2/5. In terms of biological role, catalyzes the transfer of the phosphoribosyl group of 5-phosphorylribose-1-pyrophosphate (PRPP) to anthranilate to yield N-(5'-phosphoribosyl)-anthranilate (PRA). The chain is Anthranilate phosphoribosyltransferase from Photobacterium profundum (strain SS9).